Here is a 355-residue protein sequence, read N- to C-terminus: uncharacterized protein (355 aa).

This is an uncharacterized protein from Acanthamoeba polyphaga (Amoeba).